Consider the following 684-residue polypeptide: Methionine--tRNA ligase (684 aa).

Positions 12 to 22 (PYANGSIHLGH) match the 'HIGH' region motif. Residues Cys143, Cys146, Cys156, and Cys159 each contribute to the Zn(2+) site. The 'KMSKS' region signature appears at 339–343 (KMSKS). Lys342 is an ATP binding site. A tRNA-binding domain is found at 581–684 (DFMKIDMRVA…AGAQPGDKVG (104 aa)).

This sequence belongs to the class-I aminoacyl-tRNA synthetase family. MetG type 1 subfamily. In terms of assembly, homodimer. Requires Zn(2+) as cofactor.

It localises to the cytoplasm. The enzyme catalyses tRNA(Met) + L-methionine + ATP = L-methionyl-tRNA(Met) + AMP + diphosphate. Is required not only for elongation of protein synthesis but also for the initiation of all mRNA translation through initiator tRNA(fMet) aminoacylation. The polypeptide is Methionine--tRNA ligase (Neisseria gonorrhoeae (strain ATCC 700825 / FA 1090)).